The sequence spans 206 residues: Ribosomal RNA large subunit methyltransferase E (206 aa).

Gly-61, Trp-63, Asp-81, Asp-97, and Asp-122 together coordinate S-adenosyl-L-methionine. The Proton acceptor role is filled by Lys-162.

It belongs to the class I-like SAM-binding methyltransferase superfamily. RNA methyltransferase RlmE family.

Its subcellular location is the cytoplasm. It catalyses the reaction uridine(2552) in 23S rRNA + S-adenosyl-L-methionine = 2'-O-methyluridine(2552) in 23S rRNA + S-adenosyl-L-homocysteine + H(+). Its function is as follows. Specifically methylates the uridine in position 2552 of 23S rRNA at the 2'-O position of the ribose in the fully assembled 50S ribosomal subunit. The chain is Ribosomal RNA large subunit methyltransferase E from Neisseria gonorrhoeae (strain NCCP11945).